A 122-amino-acid chain; its full sequence is Small ribosomal subunit protein bS16 (122 aa).

The disordered stretch occupies residues arginine 85–glutamate 122. Residues arginine 99–lysine 110 are compositionally biased toward basic and acidic residues. The segment covering alanine 111–glutamate 122 has biased composition (low complexity).

The protein belongs to the bacterial ribosomal protein bS16 family.

The chain is Small ribosomal subunit protein bS16 from Rhizobium etli (strain ATCC 51251 / DSM 11541 / JCM 21823 / NBRC 15573 / CFN 42).